Reading from the N-terminus, the 303-residue chain is Cysteine synthase B (303 aa).

An N6-(pyridoxal phosphate)lysine modification is found at Lys-41. Pyridoxal 5'-phosphate contacts are provided by residues Asn-71, 174-178 (GTTGT), and Ser-255.

Belongs to the cysteine synthase/cystathionine beta-synthase family. Homodimer. Requires pyridoxal 5'-phosphate as cofactor.

It catalyses the reaction O-acetyl-L-serine + hydrogen sulfide = L-cysteine + acetate. It participates in amino-acid biosynthesis; L-cysteine biosynthesis; L-cysteine from L-serine: step 2/2. Two cysteine synthase enzymes are found. Both catalyze the same reaction. Cysteine synthase B can also use thiosulfate in place of sulfide to give cysteine thiosulfonate as a product. In Escherichia coli (strain K12), this protein is Cysteine synthase B (cysM).